Here is a 504-residue protein sequence, read N- to C-terminus: Maturase K (504 aa).

It belongs to the intron maturase 2 family. MatK subfamily.

It is found in the plastid. The protein resides in the chloroplast. In terms of biological role, usually encoded in the trnK tRNA gene intron. Probably assists in splicing its own and other chloroplast group II introns. This is Maturase K from Carpinus betulus (European hornbeam).